Here is a 269-residue protein sequence, read N- to C-terminus: Glutamate racemase (269 aa).

Substrate is bound by residues Asp13–Ser14 and Tyr45–Ser46. Cys77 acts as the Proton donor/acceptor in catalysis. Asn78–Thr79 provides a ligand contact to substrate. Cys188 acts as the Proton donor/acceptor in catalysis. A substrate-binding site is contributed by Thr189–His190.

This sequence belongs to the aspartate/glutamate racemases family.

The catalysed reaction is L-glutamate = D-glutamate. It participates in cell wall biogenesis; peptidoglycan biosynthesis. Provides the (R)-glutamate required for cell wall biosynthesis. This Pasteurella multocida (strain Pm70) protein is Glutamate racemase.